A 72-amino-acid polypeptide reads, in one-letter code: Translation initiation factor IF-1 (72 aa).

An S1-like domain is found at 1-72 (MAKDDVIEID…DKGRITYRYK (72 aa)).

This sequence belongs to the IF-1 family. In terms of assembly, component of the 30S ribosomal translation pre-initiation complex which assembles on the 30S ribosome in the order IF-2 and IF-3, IF-1 and N-formylmethionyl-tRNA(fMet); mRNA recruitment can occur at any time during PIC assembly.

Its subcellular location is the cytoplasm. Its function is as follows. One of the essential components for the initiation of protein synthesis. Stabilizes the binding of IF-2 and IF-3 on the 30S subunit to which N-formylmethionyl-tRNA(fMet) subsequently binds. Helps modulate mRNA selection, yielding the 30S pre-initiation complex (PIC). Upon addition of the 50S ribosomal subunit IF-1, IF-2 and IF-3 are released leaving the mature 70S translation initiation complex. This is Translation initiation factor IF-1 from Campylobacter fetus subsp. fetus (strain 82-40).